Reading from the N-terminus, the 182-residue chain is ATP synthase subunit b, chloroplastic (182 aa).

The chain crosses the membrane as a helical span at residues 31–53 (IINISVVLGVLVYFGKGVLSNLL).

The protein belongs to the ATPase B chain family. In terms of assembly, F-type ATPases have 2 components, F(1) - the catalytic core - and F(0) - the membrane proton channel. F(1) has five subunits: alpha(3), beta(3), gamma(1), delta(1), epsilon(1). F(0) has four main subunits: a(1), b(1), b'(1) and c(10-14). The alpha and beta chains form an alternating ring which encloses part of the gamma chain. F(1) is attached to F(0) by a central stalk formed by the gamma and epsilon chains, while a peripheral stalk is formed by the delta, b and b' chains.

The protein localises to the plastid. It localises to the chloroplast thylakoid membrane. In terms of biological role, f(1)F(0) ATP synthase produces ATP from ADP in the presence of a proton or sodium gradient. F-type ATPases consist of two structural domains, F(1) containing the extramembraneous catalytic core and F(0) containing the membrane proton channel, linked together by a central stalk and a peripheral stalk. During catalysis, ATP synthesis in the catalytic domain of F(1) is coupled via a rotary mechanism of the central stalk subunits to proton translocation. Functionally, component of the F(0) channel, it forms part of the peripheral stalk, linking F(1) to F(0). This is ATP synthase subunit b, chloroplastic from Welwitschia mirabilis (Tree tumbo).